A 164-amino-acid polypeptide reads, in one-letter code: Crossover junction endodeoxyribonuclease RuvC (164 aa).

Catalysis depends on residues aspartate 7, glutamate 67, and aspartate 140. Mg(2+) is bound by residues aspartate 7, glutamate 67, and aspartate 140.

Belongs to the RuvC family. Homodimer which binds Holliday junction (HJ) DNA. The HJ becomes 2-fold symmetrical on binding to RuvC with unstacked arms; it has a different conformation from HJ DNA in complex with RuvA. In the full resolvosome a probable DNA-RuvA(4)-RuvB(12)-RuvC(2) complex forms which resolves the HJ. The cofactor is Mg(2+).

It localises to the cytoplasm. It catalyses the reaction Endonucleolytic cleavage at a junction such as a reciprocal single-stranded crossover between two homologous DNA duplexes (Holliday junction).. Functionally, the RuvA-RuvB-RuvC complex processes Holliday junction (HJ) DNA during genetic recombination and DNA repair. Endonuclease that resolves HJ intermediates. Cleaves cruciform DNA by making single-stranded nicks across the HJ at symmetrical positions within the homologous arms, yielding a 5'-phosphate and a 3'-hydroxyl group; requires a central core of homology in the junction. The consensus cleavage sequence is 5'-(A/T)TT(C/G)-3'. Cleavage occurs on the 3'-side of the TT dinucleotide at the point of strand exchange. HJ branch migration catalyzed by RuvA-RuvB allows RuvC to scan DNA until it finds its consensus sequence, where it cleaves and resolves the cruciform DNA. The protein is Crossover junction endodeoxyribonuclease RuvC of Alkaliphilus oremlandii (strain OhILAs) (Clostridium oremlandii (strain OhILAs)).